Consider the following 128-residue polypeptide: Large-conductance mechanosensitive channel (128 aa).

2 helical membrane-spanning segments follow: residues 10–30 and 76–96; these read FAMR…SAFG and GLFI…FMMI.

The protein belongs to the MscL family. In terms of assembly, homopentamer.

It localises to the cell inner membrane. Channel that opens in response to stretch forces in the membrane lipid bilayer. May participate in the regulation of osmotic pressure changes within the cell. The protein is Large-conductance mechanosensitive channel of Haemophilus influenzae (strain 86-028NP).